A 240-amino-acid chain; its full sequence is Methylthioribulose-1-phosphate dehydratase (240 aa).

Residue Cys-99 participates in substrate binding. The Zn(2+) site is built by His-116 and His-118. The active-site Proton donor/acceptor is the Glu-145. His-201 contacts Zn(2+).

The protein belongs to the aldolase class II family. MtnB subfamily. The cofactor is Zn(2+).

It localises to the cytoplasm. The enzyme catalyses 5-(methylsulfanyl)-D-ribulose 1-phosphate = 5-methylsulfanyl-2,3-dioxopentyl phosphate + H2O. The protein operates within amino-acid biosynthesis; L-methionine biosynthesis via salvage pathway; L-methionine from S-methyl-5-thio-alpha-D-ribose 1-phosphate: step 2/6. In terms of biological role, catalyzes the dehydration of methylthioribulose-1-phosphate (MTRu-1-P) into 2,3-diketo-5-methylthiopentyl-1-phosphate (DK-MTP-1-P). This is Methylthioribulose-1-phosphate dehydratase from Paracoccidioides lutzii (strain ATCC MYA-826 / Pb01) (Paracoccidioides brasiliensis).